Consider the following 414-residue polypeptide: F-box protein At3g47030 (414 aa).

Residues 1-24 (MSGMLGLSAVMGKRPKQQVTARPR) are disordered. One can recognise an F-box domain in the interval 28-77 (IEKPEEIPDDLLIDVFSRLSIEDVARCRCLSRFWSSILRRRYFTELFHKM).

In Arabidopsis thaliana (Mouse-ear cress), this protein is F-box protein At3g47030.